The following is a 286-amino-acid chain: Bifunctional protein FolD (286 aa).

NADP(+) contacts are provided by residues 165–167 (GRS), Ser190, and Val231.

It belongs to the tetrahydrofolate dehydrogenase/cyclohydrolase family. As to quaternary structure, homodimer.

It carries out the reaction (6R)-5,10-methylene-5,6,7,8-tetrahydrofolate + NADP(+) = (6R)-5,10-methenyltetrahydrofolate + NADPH. It catalyses the reaction (6R)-5,10-methenyltetrahydrofolate + H2O = (6R)-10-formyltetrahydrofolate + H(+). It participates in one-carbon metabolism; tetrahydrofolate interconversion. Its function is as follows. Catalyzes the oxidation of 5,10-methylenetetrahydrofolate to 5,10-methenyltetrahydrofolate and then the hydrolysis of 5,10-methenyltetrahydrofolate to 10-formyltetrahydrofolate. The polypeptide is Bifunctional protein FolD (Bacillus cereus (strain ZK / E33L)).